Reading from the N-terminus, the 229-residue chain is Flagellar L-ring protein (229 aa).

Positions 1–25 (MKQVRLPSSATVRAACAVAVAALAG) are cleaved as a signal peptide. The N-palmitoyl cysteine moiety is linked to residue cysteine 26. A lipid anchor (S-diacylglycerol cysteine) is attached at cysteine 26.

The protein belongs to the FlgH family. In terms of assembly, the basal body constitutes a major portion of the flagellar organelle and consists of four rings (L,P,S, and M) mounted on a central rod.

It localises to the cell outer membrane. It is found in the bacterial flagellum basal body. Its function is as follows. Assembles around the rod to form the L-ring and probably protects the motor/basal body from shearing forces during rotation. The protein is Flagellar L-ring protein of Burkholderia cenocepacia (strain ATCC BAA-245 / DSM 16553 / LMG 16656 / NCTC 13227 / J2315 / CF5610) (Burkholderia cepacia (strain J2315)).